Reading from the N-terminus, the 363-residue chain is tRNA N6-adenosine threonylcarbamoyltransferase (363 aa).

2 residues coordinate Fe cation: H121 and H125. Residues 143-147 (LASGG), D176, G189, and N287 contribute to the substrate site. Position 315 (D315) interacts with Fe cation.

It belongs to the KAE1 / TsaD family. The cofactor is Fe(2+).

It is found in the cytoplasm. It carries out the reaction L-threonylcarbamoyladenylate + adenosine(37) in tRNA = N(6)-L-threonylcarbamoyladenosine(37) in tRNA + AMP + H(+). Its function is as follows. Required for the formation of a threonylcarbamoyl group on adenosine at position 37 (t(6)A37) in tRNAs that read codons beginning with adenine. Is involved in the transfer of the threonylcarbamoyl moiety of threonylcarbamoyl-AMP (TC-AMP) to the N6 group of A37, together with TsaE and TsaB. TsaD likely plays a direct catalytic role in this reaction. The chain is tRNA N6-adenosine threonylcarbamoyltransferase from Rhodopseudomonas palustris (strain BisA53).